The following is a 395-amino-acid chain: Acetate kinase (395 aa).

Position 7 (Asn7) interacts with Mg(2+). Position 14 (Lys14) interacts with ATP. Arg85 is a binding site for substrate. The active-site Proton donor/acceptor is Asp142. ATP is bound by residues His202 to Gly206, Asp277 to Arg279, and Gly325 to Asn329. Glu378 provides a ligand contact to Mg(2+).

It belongs to the acetokinase family. As to quaternary structure, homodimer. It depends on Mg(2+) as a cofactor. Requires Mn(2+) as cofactor.

Its subcellular location is the cytoplasm. The catalysed reaction is acetate + ATP = acetyl phosphate + ADP. Its pathway is metabolic intermediate biosynthesis; acetyl-CoA biosynthesis; acetyl-CoA from acetate: step 1/2. Catalyzes the formation of acetyl phosphate from acetate and ATP. Can also catalyze the reverse reaction. This is Acetate kinase from Deinococcus geothermalis (strain DSM 11300 / CIP 105573 / AG-3a).